A 207-amino-acid polypeptide reads, in one-letter code: MQKSWRNIAIALAGMTQCARQVEELAKTGYLKTEVFETAVKSLINTDPSSAEDVFGGLDAVQPGLSTLKDILEDHRSPGNADILRYVLGAVVLQKRLARRKDVLYIIGNRLEKVSQQVEHFGCSHDNVVSNIADIYTDTISKFPYRIQVTGEFNYLQQERVAAQIRSLLFAAIRAATLWRQAGGTRWHMLFYRSKMLAATEQLLQRA.

Belongs to the HflD family.

The protein resides in the cytoplasm. It is found in the cell inner membrane. The protein is High frequency lysogenization protein HflD homolog of Teredinibacter turnerae (strain ATCC 39867 / T7901).